We begin with the raw amino-acid sequence, 429 residues long: 46 kDa membrane protein (429 aa).

9 helical membrane passes run 26-46 (AALTGAAIVVTLPIINSEDVF), 51-71 (TGIDWEVIFLLLSMMIIVSVL), 99-119 (LVLVMALGSALLDNVTTVLLI), 173-193 (FLIHLTPIVIIVTVVLSALLP), 224-244 (LLIKCGVVLLLVFVAFIAHPV), 279-299 (TLLFFAGLFIMVGALVKTDVV), 315-335 (LLTVVLTLGVSTLVSSIIDNI), 360-380 (ILWWALALGADFGGNLTAVGA), and 407-427 (IAVTVISIALAGIYLWLRYLV).

It belongs to the CitM (TC 2.A.11) transporter family.

The protein resides in the cell membrane. The chain is 46 kDa membrane protein (ag45) from Mycobacterium leprae (strain TN).